The chain runs to 70 residues: Exodeoxyribonuclease 7 small subunit (70 aa).

This sequence belongs to the XseB family. In terms of assembly, heterooligomer composed of large and small subunits.

It is found in the cytoplasm. It catalyses the reaction Exonucleolytic cleavage in either 5'- to 3'- or 3'- to 5'-direction to yield nucleoside 5'-phosphates.. Functionally, bidirectionally degrades single-stranded DNA into large acid-insoluble oligonucleotides, which are then degraded further into small acid-soluble oligonucleotides. The protein is Exodeoxyribonuclease 7 small subunit of Magnetococcus marinus (strain ATCC BAA-1437 / JCM 17883 / MC-1).